Here is a 92-residue protein sequence, read N- to C-terminus: Small ribosomal subunit protein uS19 (92 aa).

It belongs to the universal ribosomal protein uS19 family.

In terms of biological role, protein S19 forms a complex with S13 that binds strongly to the 16S ribosomal RNA. The polypeptide is Small ribosomal subunit protein uS19 (Polaromonas sp. (strain JS666 / ATCC BAA-500)).